The chain runs to 633 residues: GTPase-activating protein GYP3 (633 aa).

A disordered region spans residues 26 to 127; sequence AFTVKSPSVP…HSDDLDLVPD (102 aa). The segment covering 37 to 47 has biased composition (basic and acidic residues); the sequence is FHDKMHSDHSS. Acidic residues predominate over residues 99 to 115; it reads GEDDDDNNGDNGNEDLE. At Ser-147 the chain carries Phosphoserine. The Rab-GAP TBC domain maps to 223–456; sequence GIPAEWRGNA…RIWDCLFYEE (234 aa). Ser-484 is modified (phosphoserine).

It is found in the cytoplasm. The protein resides in the bud. It localises to the bud neck. Functionally, regulates exocytosis by functioning as a GAP for SEC4. Stimulates specifically the GTPase activity of YPT6. Also required for efficient polarization of the actin patches. The polypeptide is GTPase-activating protein GYP3 (MSB3) (Saccharomyces cerevisiae (strain ATCC 204508 / S288c) (Baker's yeast)).